Consider the following 829-residue polypeptide: Periplasmic nitrate reductase (829 aa).

A signal peptide (tat-type signal) is located at residues 1-31; that stretch reads MKLSRRDFMKANAVAAAAAAAGLTIPTVARA. In terms of domain architecture, 4Fe-4S Mo/W bis-MGD-type spans 40-96; the sequence is ITWDKAPCRFCGTGCGVLVGTQNGRIVASQGDPDAPVNRGLNCIKGYFLPKIMYGKD. [4Fe-4S] cluster contacts are provided by Cys-47, Cys-50, Cys-54, and Cys-82. Residues Lys-84, Gln-151, Asn-176, Cys-180, 213-220, 263-265, Met-373, Gln-377, Asn-483, 509-510, Lys-532, Asp-559, and 719-728 contribute to the Mo-bis(molybdopterin guanine dinucleotide) site; these read WGSNMAEM, QSD, SD, and TGRVLEHWHT. Phe-795 is a substrate binding site. Residues Asn-803 and Lys-820 each coordinate Mo-bis(molybdopterin guanine dinucleotide).

It belongs to the prokaryotic molybdopterin-containing oxidoreductase family. NasA/NapA/NarB subfamily. Component of the periplasmic nitrate reductase NapAB complex composed of NapA and NapB. [4Fe-4S] cluster serves as cofactor. The cofactor is Mo-bis(molybdopterin guanine dinucleotide). In terms of processing, predicted to be exported by the Tat system. The position of the signal peptide cleavage has not been experimentally proven.

It localises to the periplasm. It carries out the reaction 2 Fe(II)-[cytochrome] + nitrate + 2 H(+) = 2 Fe(III)-[cytochrome] + nitrite + H2O. Its function is as follows. Catalytic subunit of the periplasmic nitrate reductase complex NapAB. Receives electrons from NapB and catalyzes the reduction of nitrate to nitrite. The protein is Periplasmic nitrate reductase of Edwardsiella ictaluri (strain 93-146).